A 97-amino-acid chain; its full sequence is HssA/B-like protein 47 (97 aa).

Positions 1–33 (MTLFSSISSISNPMTSSKSSIASFGSGTSMSSN) are disordered.

Belongs to the hssA/B family.

The polypeptide is HssA/B-like protein 47 (hssl47) (Dictyostelium discoideum (Social amoeba)).